A 47-amino-acid polypeptide reads, in one-letter code: Putative glycosylation-dependent cell adhesion molecule 1 (47 aa).

The N-terminal stretch at 1-18 (MKFFMVLLPASLASTSLA) is a signal peptide.

Belongs to the PP3/GlyCAM-1 family. In terms of tissue distribution, expressed in cells harvested from milk of lactating women. Not found in other tissues.

The protein is Putative glycosylation-dependent cell adhesion molecule 1 (GLYCAM1) of Homo sapiens (Human).